A 464-amino-acid chain; its full sequence is Argininosuccinate lyase (464 aa).

This sequence belongs to the lyase 1 family. Argininosuccinate lyase subfamily.

Its subcellular location is the cytoplasm. The catalysed reaction is 2-(N(omega)-L-arginino)succinate = fumarate + L-arginine. Its pathway is amino-acid biosynthesis; L-arginine biosynthesis; L-arginine from L-ornithine and carbamoyl phosphate: step 3/3. This Ectopseudomonas mendocina (strain ymp) (Pseudomonas mendocina) protein is Argininosuccinate lyase.